The following is a 134-amino-acid chain: MAEQSDKAVKYYTLEEIQKHNNSKSTWLILHHKVYDLTKFLEEHPGGEEVLREQAGGDATENFEDVGHSTDARELSKTFIIGELHPDDRSKIAKPSETLITTVESNSSWWTNWVIPAISALVVSLMYHFYTSEN.

Alanine 2 is modified (N-acetylalanine). Residues lysine 7, lysine 10, and lysine 19 each carry the N6-acetyllysine modification. Residues 9 to 85 (VKYYTLEEIQ…SKTFIIGELH (77 aa)) form the Cytochrome b5 heme-binding domain. Positions 44 and 68 each coordinate heme. A helical membrane pass occupies residues 109–131 (WWTNWVIPAISALVVSLMYHFYT).

The protein belongs to the cytochrome b5 family.

It localises to the endoplasmic reticulum membrane. The protein localises to the microsome membrane. It is found in the cytoplasm. Cytochrome b5 is a membrane-bound hemoprotein functioning as an electron carrier for several membrane-bound oxygenases. The sequence is that of Cytochrome b5 (CYB5A) from Sus scrofa (Pig).